Here is a 1032-residue protein sequence, read N- to C-terminus: Toll-like receptor 9 (1032 aa).

The N-terminal stretch at 1–25 (MVLRRRTLHPLSLLVQAAVLAETLA) is a signal peptide. Residues 26-818 (LGTLPAFLPC…LCLDEVLSWD (793 aa)) lie on the Extracellular side of the membrane. C35 and C45 form a disulfide bridge. Position 47 to 51 (47 to 51 (WLFLK)) interacts with DNA. LRR repeat units follow at residues 62–85 (CSNI…DFVH), 87–110 (SNLR…HFSC), 122–147 (MRTL…SLVN), 150–166 (LSHT…LAGL), 167–190 (YSLR…AVKV), 198–221 (LSNL…LPPS), 223–242 (EYLL…DLAN), 243–268 (LTSL…CIEC), 283–306 (LSHL…WFQG), 308–332 (VNLS…AFQN), 333–356 (LTRL…RLHL), 363–386 (LVSL…TLRW), 390–413 (LPKL…IFGT), 415–440 (RALR…TPEE), 471–495 (CKNF…MFVN), 497–520 (SRLQ…QFLP), 521–544 (LTNL…SFSE), 546–573 (PQLQ…SFVT), 575–599 (LSML…LNSN), 601–623 (VRFL…LYLH), 628–651 (LSGL…NLDN), 653–676 (PKSL…SLSF), 677–700 (LPNL…TLPN), 702–724 (TLLQ…FFAL), 725–748 (AVEL…WFGP), and 750–773 (VMNL…AFVD). N-linked (GlcNAc...) asparagine glycosylation occurs at N64. Residues 72–77 (SNRIHH) and 95–109 (KWNC…LHFS) each bind DNA. A disulfide bridge links C98 with C110. An N-linked (GlcNAc...) asparagine glycan is attached at N129. Y132 serves as a coordination point for DNA. N147 is a glycosylation site (N-linked (GlcNAc...) asparagine). C178 and C184 are disulfide-bonded. 179–181 (YYK) contacts DNA. The N-linked (GlcNAc...) asparagine glycan is linked to N200. Y208 contributes to the DNA binding site. N-linked (GlcNAc...) asparagine glycosylation is found at N210 and N242. Disulfide bonds link C255–C268 and C258–C265. S-palmitoyl cysteine attachment occurs at residues C258 and C265. N-linked (GlcNAc...) asparagine glycans are attached at residues N300, N309, N332, and N340. The interval 430–462 (PSTLSEATPEEADDAEQEELLSADPHPAPLSTP) is disordered. Residues 437–450 (TPEEADDAEQEELL) show a composition bias toward acidic residues. A disulfide bond links C471 and C501. Residues N495 and N514 are each glycosylated (N-linked (GlcNAc...) asparagine). A glycan (N-linked (GlcNAc...) asparagine) is linked at N568. 3 N-linked (GlcNAc...) asparagine glycosylation sites follow: N670, N695, and N700. N-linked (GlcNAc...) asparagine glycosylation is found at N732 and N752. 2 cysteine pairs are disulfide-bonded: C765/C791 and C767/C810. The helical transmembrane segment at 819–839 (CFGLSLLAVAVGMVVPILHHL) threads the bilayer. The Cytoplasmic segment spans residues 840–1032 (CGWDVWYCFH…QNFCRGPTAE (193 aa)). The region spanning 868–1013 (LPYDAFVVFD…GFWAQLSTAL (146 aa)) is the TIR domain.

This sequence belongs to the Toll-like receptor family. In terms of assembly, monomer and homodimer. Exists as a monomer in the absence of unmethylated cytidine-phosphate-guanosine (CpG) ligand. Proteolytic processing of an insertion loop (Z-loop) is required for homodimerization upon binding to the unmethylated CpG ligand leading to its activation. Interacts with MYD88 via their respective TIR domains. Interacts with BTK. Interacts (via transmembrane domain) with UNC93B1. Interacts with CD300LH; the interaction may promote full activation of TLR9-triggered innate responses. Interacts with CNPY3 and HSP90B1; this interaction is required for proper folding in the endoplasmic reticulum. Interacts with SMPDL3B. Interacts with CD82; this interaction is essential for TLR9-dependent myddosome formation in response to CpG stimulation. Activated by proteolytic cleavage of the flexible loop between repeats LRR14 and LRR15 within the ectodomain. Cleavage requires UNC93B1. Proteolytically processed by first removing the majority of the ectodomain by either asparagine endopeptidase (AEP) or a cathepsin followed by a trimming event that is solely cathepsin mediated and required for optimal receptor signaling. Post-translationally, palmitoylated by ZDHHC3 in the Golgi regulates TLR9 trafficking from the Golgi to endosomes. Depalmitoylation by PPT1 controls the release of TLR9 from UNC93B1 in endosomes. In terms of tissue distribution, expressed in the basolateral region of gastric epithelial cells with high levels detected in antrum and body mucosa (at protein level). Detected in spleen and stomach at higher levels in C57BL/6 mice than BALB/C.

The protein resides in the endoplasmic reticulum membrane. The protein localises to the endosome. It is found in the lysosome. Its subcellular location is the cytoplasmic vesicle. It localises to the phagosome. Key component of innate and adaptive immunity. TLRs (Toll-like receptors) control host immune response against pathogens through recognition of molecular patterns specific to microorganisms. TLR9 is a nucleotide-sensing TLR which is activated by unmethylated cytidine-phosphate-guanosine (CpG) dinucleotides. Acts via MYD88 and TRAF6, leading to NF-kappa-B activation, cytokine secretion and the inflammatory response. Plays a role in defense against systemic mouse cytomegalovirus infection. Controls lymphocyte response to Helicobacter infection. Upon CpG stimulation, induces B-cell proliferation, activation, survival and antibody production. This Mus musculus (Mouse) protein is Toll-like receptor 9 (Tlr9).